The primary structure comprises 622 residues: Low affinity potassium transport system protein Kup (622 aa).

The next 12 membrane-spanning stretches (helical) occupy residues 9–29 (LPAI…TSPL), 49–69 (VFGF…IKYL), 103–123 (VIMG…TPAI), 137–157 (PQLD…LFMI), 165–185 (VGKL…GLGL), 213–233 (VSFI…ALYA), 247–267 (WFTV…ALLL), 276–296 (PFFL…AALA), 337–357 (IYIP…IVSF), 363–383 (LAAA…ILST), 396–416 (FVAL…TANL), and 419–439 (LLSG…VMTT).

Belongs to the HAK/KUP transporter (TC 2.A.72) family.

The protein localises to the cell inner membrane. It catalyses the reaction K(+)(in) + H(+)(in) = K(+)(out) + H(+)(out). In terms of biological role, responsible for the low-affinity transport of potassium into the cell. Likely operates as a K(+):H(+) symporter. The protein is Low affinity potassium transport system protein Kup of Escherichia coli (strain K12 / MC4100 / BW2952).